A 436-amino-acid polypeptide reads, in one-letter code: Trigger factor (436 aa).

Residues 161–246 (EDQLNIDFVG…VNTVSEPKLP (86 aa)) form the PPIase FKBP-type domain.

This sequence belongs to the FKBP-type PPIase family. Tig subfamily.

Its subcellular location is the cytoplasm. The catalysed reaction is [protein]-peptidylproline (omega=180) = [protein]-peptidylproline (omega=0). In terms of biological role, involved in protein export. Acts as a chaperone by maintaining the newly synthesized protein in an open conformation. Functions as a peptidyl-prolyl cis-trans isomerase. This chain is Trigger factor, found in Pseudomonas savastanoi pv. phaseolicola (strain 1448A / Race 6) (Pseudomonas syringae pv. phaseolicola (strain 1448A / Race 6)).